We begin with the raw amino-acid sequence, 63 residues long: Sperm protamine P1 (63 aa).

The tract at residues 1 to 63 (MARYRRHSRS…RYSRRGRRRY (63 aa)) is disordered.

It belongs to the protamine P1 family. In terms of tissue distribution, testis.

It is found in the nucleus. It localises to the chromosome. Functionally, protamines substitute for histones in the chromatin of sperm during the haploid phase of spermatogenesis. They compact sperm DNA into a highly condensed, stable and inactive complex. This Pseudantechinus macdonnellensis (Fat-tailed marsupial mouse) protein is Sperm protamine P1 (PRM1).